The following is a 103-amino-acid chain: Small ribosomal subunit protein uS17 (103 aa).

The interval Ser78 to Glu103 is disordered.

The protein belongs to the universal ribosomal protein uS17 family. Part of the 30S ribosomal subunit.

Functionally, one of the primary rRNA binding proteins, it binds specifically to the 5'-end of 16S ribosomal RNA. This is Small ribosomal subunit protein uS17 from Parasynechococcus marenigrum (strain WH8102).